We begin with the raw amino-acid sequence, 206 residues long: Small ribosomal subunit protein uS4 (206 aa).

One can recognise an S4 RNA-binding domain in the interval 96-157 (CRLDNVVYRM…KCRNQLRIAQ (62 aa)).

It belongs to the universal ribosomal protein uS4 family. In terms of assembly, part of the 30S ribosomal subunit. Contacts protein S5. The interaction surface between S4 and S5 is involved in control of translational fidelity.

Its function is as follows. One of the primary rRNA binding proteins, it binds directly to 16S rRNA where it nucleates assembly of the body of the 30S subunit. In terms of biological role, with S5 and S12 plays an important role in translational accuracy. The sequence is that of Small ribosomal subunit protein uS4 from Stutzerimonas stutzeri (strain A1501) (Pseudomonas stutzeri).